Reading from the N-terminus, the 186-residue chain is Lipid A acyltransferase PagP (186 aa).

The N-terminal stretch at 1–19 (MKRLISCLTIICALNRSAA) is a signal peptide. Catalysis depends on residues His60, Asp103, and Ser104.

The protein belongs to the lipid A palmitoyltransferase family. In terms of assembly, homodimer.

Its subcellular location is the cell outer membrane. The enzyme catalyses a lipid A + a 1,2-diacyl-sn-glycero-3-phosphocholine = a hepta-acyl lipid A + a 2-acyl-sn-glycero-3-phosphocholine. It carries out the reaction a lipid IVA + a 1,2-diacyl-sn-glycero-3-phosphocholine = a lipid IVB + a 2-acyl-sn-glycero-3-phosphocholine. The catalysed reaction is a lipid IIA + a 1,2-diacyl-sn-glycero-3-phosphocholine = a lipid IIB + a 2-acyl-sn-glycero-3-phosphocholine. In terms of biological role, transfers a fatty acid residue from the sn-1 position of a phospholipid to the N-linked hydroxyfatty acid chain on the proximal unit of lipid A or its precursors. Confers resistance to cationic antimicrobial peptides (CAMPs). Promotes the ability of L.pneumophila to replicate and/or survive in macrophages. Important for ability to kill macrophages and to promote the virulence. The sequence is that of Lipid A acyltransferase PagP from Legionella pneumophila.